The chain runs to 668 residues: MKHYSIQPANLEFNAEGTPVSRDFDDVYFSNDNGLEETRYVFLGGNQLEVRFPEHPHPLFVIAESGFGTGLNFLTLWKAFDQFREAHPQAQLQRLHFISFEKFPLTRADLALAHQHWPELAPWAEQLQAQWPMPLPGCHRLLLDEGRVTLDLWFGDINELTSQLDDSLNQKVDAWFLDGFAPAKNPDMWTQNLFNAMARLARPGGTLATFTSAGFVRRGLQEAGFTMQKRKGFGRKREMLCGVMEQTLPLPCSTPWFNRTGSSKREVAIIGGGIASALLSLALLRRGWQVALYCADEAPALGASGNRQGALYPLLSKHDEALNRLFSNAFTFARRFYDQLPVKFDHDWCGVTQLGWDEKSQHKIAQMLSMDLPAELAVAVEANAVEQITGVATNCSGITYPQGGWLCPAELTRNVLELAQQQGLQIYYQYQLQNLSRKDDCWLLNFAGDQQATHSVVVLANGHQISRFSQTSTLPVYSVAGQVSHIPTTPELAELKQVLCYDGYLTPQNPANQHHCIGASYHRGSEDTAYSEDDQQQNRQRLIDCFPQAQWAKEVDVSDKEARCGVRCATRDHLPMVGNVPDYEATLVEYASLAEQKDEAVSAPVFDDLFMFAALGSRGLCSAPLCAEILAAQMSDEPNPMDASTLAALNPNRLWVRKLLKGKAVKAG.

Residues Met-1–Glu-245 form a tRNA (mnm(5)s(2)U34)-methyltransferase region. An FAD-dependent cmnm(5)s(2)U34 oxidoreductase region spans residues Ile-270–Gly-668.

The protein in the N-terminal section; belongs to the methyltransferase superfamily. tRNA (mnm(5)s(2)U34)-methyltransferase family. In the C-terminal section; belongs to the DAO family. Requires FAD as cofactor.

Its subcellular location is the cytoplasm. It catalyses the reaction 5-aminomethyl-2-thiouridine(34) in tRNA + S-adenosyl-L-methionine = 5-methylaminomethyl-2-thiouridine(34) in tRNA + S-adenosyl-L-homocysteine + H(+). Functionally, catalyzes the last two steps in the biosynthesis of 5-methylaminomethyl-2-thiouridine (mnm(5)s(2)U) at the wobble position (U34) in tRNA. Catalyzes the FAD-dependent demodification of cmnm(5)s(2)U34 to nm(5)s(2)U34, followed by the transfer of a methyl group from S-adenosyl-L-methionine to nm(5)s(2)U34, to form mnm(5)s(2)U34. This is tRNA 5-methylaminomethyl-2-thiouridine biosynthesis bifunctional protein MnmC from Shigella flexneri serotype 5b (strain 8401).